A 256-amino-acid chain; its full sequence is Thiazole synthase (256 aa).

Lysine 95 serves as the catalytic Schiff-base intermediate with DXP. Residues glycine 156, 182-183 (AG), and 204-205 (NT) each bind 1-deoxy-D-xylulose 5-phosphate.

This sequence belongs to the ThiG family. As to quaternary structure, homotetramer. Forms heterodimers with either ThiH or ThiS.

The protein localises to the cytoplasm. The enzyme catalyses [ThiS sulfur-carrier protein]-C-terminal-Gly-aminoethanethioate + 2-iminoacetate + 1-deoxy-D-xylulose 5-phosphate = [ThiS sulfur-carrier protein]-C-terminal Gly-Gly + 2-[(2R,5Z)-2-carboxy-4-methylthiazol-5(2H)-ylidene]ethyl phosphate + 2 H2O + H(+). Its pathway is cofactor biosynthesis; thiamine diphosphate biosynthesis. Its function is as follows. Catalyzes the rearrangement of 1-deoxy-D-xylulose 5-phosphate (DXP) to produce the thiazole phosphate moiety of thiamine. Sulfur is provided by the thiocarboxylate moiety of the carrier protein ThiS. In vitro, sulfur can be provided by H(2)S. This Salmonella paratyphi A (strain ATCC 9150 / SARB42) protein is Thiazole synthase.